The chain runs to 164 residues: Nucleotide-binding protein Mfla_1706 (164 aa).

Belongs to the YajQ family.

In terms of biological role, nucleotide-binding protein. The polypeptide is Nucleotide-binding protein Mfla_1706 (Methylobacillus flagellatus (strain ATCC 51484 / DSM 6875 / VKM B-1610 / KT)).